A 264-amino-acid polypeptide reads, in one-letter code: CD320 antigen (264 aa).

Residues 1 to 28 (MARCGAGRAAALGLVLRLLLGLRTGPEA) form the signal peptide. One can recognise an LDL-receptor class A 1 domain in the interval 50-87 (SCPTDTFKCLTSGYCVPLSWRCDGDRDCSDGSDEEECR). 3 cysteine pairs are disulfide-bonded: cysteine 51-cysteine 64, cysteine 58-cysteine 77, and cysteine 71-cysteine 86. Positions 69, 72, 74, 76, 82, and 83 each coordinate Ca(2+). The N-linked (GlcNAc...) asparagine glycan is linked to asparagine 122. One can recognise an LDL-receptor class A 2 domain in the interval 127–164 (PCQEGELRCILDDVCIPHTWRCDGHPDCPDSSDELSCD). Disulfide bonds link cysteine 128-cysteine 141, cysteine 135-cysteine 154, and cysteine 148-cysteine 163. Ca(2+) is bound by residues tryptophan 146, aspartate 149, histidine 151, aspartate 153, aspartate 159, and glutamate 160. N-linked (GlcNAc...) asparagine glycosylation occurs at asparagine 195. A helical membrane pass occupies residues 213–233 (VIAAAGVLSAILVSATILILL).

In terms of assembly, interacts (via LDL-receptor class A domains) with TCN2.

It localises to the cell membrane. Functionally, receptor for transcobalamin saturated with cobalamin (TCbl). Plays an important role in cobalamin uptake. Plasma membrane protein that is expressed on follicular dendritic cells (FDC) and mediates interaction with germinal center B cells. Functions as a costimulator to promote B cell responses to antigenic stimuli; promotes B cell differentiation and proliferation. Germinal center-B (GC-B) cells differentiate into memory B-cells and plasma cells (PC) through interaction with T-cells and follicular dendritic cells (FDC). CD320 augments the proliferation of PC precursors generated by IL-10. The polypeptide is CD320 antigen (Cd320) (Rattus norvegicus (Rat)).